Reading from the N-terminus, the 218-residue chain is Thiopurine S-methyltransferase (218 aa).

S-adenosyl-L-methionine-binding residues include W10, L45, E66, and R123.

It belongs to the class I-like SAM-binding methyltransferase superfamily. TPMT family.

The protein localises to the cytoplasm. The catalysed reaction is S-adenosyl-L-methionine + a thiopurine = S-adenosyl-L-homocysteine + a thiopurine S-methylether.. The sequence is that of Thiopurine S-methyltransferase from Shewanella putrefaciens (strain CN-32 / ATCC BAA-453).